The sequence spans 406 residues: Arginine biosynthesis bifunctional protein ArgJ (406 aa).

The substrate site is built by Thr-152, Lys-179, Thr-190, Glu-277, Asn-401, and Ser-406. Thr-190 serves as the catalytic Nucleophile.

The protein belongs to the ArgJ family. As to quaternary structure, heterotetramer of two alpha and two beta chains.

Its subcellular location is the cytoplasm. The enzyme catalyses N(2)-acetyl-L-ornithine + L-glutamate = N-acetyl-L-glutamate + L-ornithine. The catalysed reaction is L-glutamate + acetyl-CoA = N-acetyl-L-glutamate + CoA + H(+). The protein operates within amino-acid biosynthesis; L-arginine biosynthesis; L-ornithine and N-acetyl-L-glutamate from L-glutamate and N(2)-acetyl-L-ornithine (cyclic): step 1/1. Its pathway is amino-acid biosynthesis; L-arginine biosynthesis; N(2)-acetyl-L-ornithine from L-glutamate: step 1/4. Its function is as follows. Catalyzes two activities which are involved in the cyclic version of arginine biosynthesis: the synthesis of N-acetylglutamate from glutamate and acetyl-CoA as the acetyl donor, and of ornithine by transacetylation between N(2)-acetylornithine and glutamate. The polypeptide is Arginine biosynthesis bifunctional protein ArgJ (Neisseria gonorrhoeae (strain ATCC 700825 / FA 1090)).